We begin with the raw amino-acid sequence, 163 residues long: Cyanate hydratase (163 aa).

Residues arginine 103, glutamate 106, and serine 129 contribute to the active site.

The protein belongs to the cyanase family.

The enzyme catalyses cyanate + hydrogencarbonate + 3 H(+) = NH4(+) + 2 CO2. In terms of biological role, catalyzes the reaction of cyanate with bicarbonate to produce ammonia and carbon dioxide. The chain is Cyanate hydratase from Paracoccidioides lutzii (strain ATCC MYA-826 / Pb01) (Paracoccidioides brasiliensis).